We begin with the raw amino-acid sequence, 409 residues long: DNA primase DnaG (409 aa).

Residues 175 to 261 form the Toprim domain; that stretch reads DAIIVVEGRA…EVEELTRKEI (87 aa). The Mg(2+) site is built by E181, D223, and D225. A compositionally biased stretch (basic and acidic residues) spans 280–289; the sequence is ERPKDKEREK. The disordered stretch occupies residues 280-322; that stretch reads ERPKDKEREKGKKPKPKKRPERRGRPRKKKARPKRGPQERRLL. Positions 290–314 are enriched in basic residues; sequence GKKPKPKKRPERRGRPRKKKARPKR.

This sequence belongs to the archaeal DnaG primase family. In terms of assembly, forms a ternary complex with MCM helicase and DNA. Component of the archaeal exosome complex. Mg(2+) is required as a cofactor.

It carries out the reaction ssDNA + n NTP = ssDNA/pppN(pN)n-1 hybrid + (n-1) diphosphate.. RNA polymerase that catalyzes the synthesis of short RNA molecules used as primers for DNA polymerase during DNA replication. Also part of the exosome, which is a complex involved in RNA degradation. Acts as a poly(A)-binding protein that enhances the interaction between heteromeric, adenine-rich transcripts and the exosome. This chain is DNA primase DnaG, found in Methanopyrus kandleri (strain AV19 / DSM 6324 / JCM 9639 / NBRC 100938).